We begin with the raw amino-acid sequence, 159 residues long: S-ribosylhomocysteine lyase (159 aa).

Histidine 53, histidine 57, and cysteine 124 together coordinate Fe cation.

It belongs to the LuxS family. As to quaternary structure, homodimer. Fe cation serves as cofactor.

The catalysed reaction is S-(5-deoxy-D-ribos-5-yl)-L-homocysteine = (S)-4,5-dihydroxypentane-2,3-dione + L-homocysteine. In terms of biological role, involved in the synthesis of autoinducer 2 (AI-2) which is secreted by bacteria and is used to communicate both the cell density and the metabolic potential of the environment. The regulation of gene expression in response to changes in cell density is called quorum sensing. Catalyzes the transformation of S-ribosylhomocysteine (RHC) to homocysteine (HC) and 4,5-dihydroxy-2,3-pentadione (DPD). This chain is S-ribosylhomocysteine lyase, found in Porphyromonas gingivalis (strain ATCC 33277 / DSM 20709 / CIP 103683 / JCM 12257 / NCTC 11834 / 2561).